The chain runs to 309 residues: Ribosomal RNA small subunit methyltransferase H (309 aa).

S-adenosyl-L-methionine contacts are provided by residues 33–35, Asp53, Phe79, Asp100, and Gln107; that span reads GGH.

It belongs to the methyltransferase superfamily. RsmH family.

Its subcellular location is the cytoplasm. It catalyses the reaction cytidine(1402) in 16S rRNA + S-adenosyl-L-methionine = N(4)-methylcytidine(1402) in 16S rRNA + S-adenosyl-L-homocysteine + H(+). Functionally, specifically methylates the N4 position of cytidine in position 1402 (C1402) of 16S rRNA. The polypeptide is Ribosomal RNA small subunit methyltransferase H (Clostridium botulinum (strain Okra / Type B1)).